The following is a 107-amino-acid chain: uncharacterized protein (107 aa).

The segment at 87–107 (KNRNGPKAEKRRPYVRAHAKW) is disordered.

This is an uncharacterized protein from Saccharomyces cerevisiae (strain ATCC 204508 / S288c) (Baker's yeast).